Consider the following 149-residue polypeptide: Large ribosomal subunit protein bL9 (149 aa).

This sequence belongs to the bacterial ribosomal protein bL9 family.

Binds to the 23S rRNA. The polypeptide is Large ribosomal subunit protein bL9 (Ligilactobacillus salivarius (strain UCC118) (Lactobacillus salivarius)).